We begin with the raw amino-acid sequence, 160 residues long: Nucleotide-binding protein AHA_1129 (160 aa).

It belongs to the YajQ family.

Nucleotide-binding protein. The chain is Nucleotide-binding protein AHA_1129 from Aeromonas hydrophila subsp. hydrophila (strain ATCC 7966 / DSM 30187 / BCRC 13018 / CCUG 14551 / JCM 1027 / KCTC 2358 / NCIMB 9240 / NCTC 8049).